Here is a 168-residue protein sequence, read N- to C-terminus: Gamma-glutamylaminecyclotransferase (168 aa).

Residues 1 to 20 form a disordered region; the sequence is MPGPECKWSTTETGAPCGTD. 32-35 lines the substrate pocket; that stretch reads YGTL. The Proton acceptor role is filled by Glu107.

This sequence belongs to the gamma-glutamylcyclotransferase family. In terms of assembly, monomer.

The catalysed reaction is epsilon-(gamma-L-glutamyl)-L-lysine = 5-oxo-L-proline + L-lysine. Contributes to degradation of proteins cross-linked by transglutaminases by degrading the cross-link between a lysine and a glutamic acid residue. Catalyzes the formation of 5-oxo-L-proline from L-gamma-glutamyl-L-epsilon-lysine. Inactive with L-gamma-glutamyl-alpha-amino acid substrates such as L-gamma-glutamyl-L-alpha-cysteine and L-gamma-glutamyl-L-alpha-alanine. This Bos taurus (Bovine) protein is Gamma-glutamylaminecyclotransferase (GGACT).